The following is a 219-amino-acid chain: Transmembrane emp24 domain-containing protein 10 (219 aa).

An N-terminal signal peptide occupies residues 1 to 31 (MSGWSGPLARRGPGPLALLFLFLLGPSSVLA). The required for interaction with STX17 stretch occupies residues 1–142 (MSGWSGPLAR…KNYEEIAKVE (142 aa)). Over 32 to 185 (ISFHLPVNSR…RDTNESTNTR (154 aa)) the chain is Lumenal. A GOLD domain is found at 41–193 (RKCLREEIHK…TRVLYFSIFS (153 aa)). A required for TMED10 and TMED2 cis-Golgi network localization region spans residues 147–178 (LEVELRRLEDLSESIVNDFAYMKKREEEMRDT). Residues Arg-171 and Arg-176 each carry the dimethylated arginine modification. Asn-179 carries an N-linked (GlcNAc...) asparagine glycan. The chain crosses the membrane as a helical span at residues 186-206 (VLYFSIFSMFCLIGLATWQVF). The interaction with COPG1 stretch occupies residues 204-219 (QVFYLRRFFKAKKLIE). Over 207-219 (YLRRFFKAKKLIE) the chain is Cytoplasmic. The interval 207–219 (YLRRFFKAKKLIE) is interaction with ARF1 and IL1B. The short motif at 211–212 (FF) is the COPII vesicle coat-binding element. The short motif at 211–219 (FFKAKKLIE) is the COPI vesicle coat-binding element.

Belongs to the EMP24/GP25L family. As to quaternary structure, predominantly dimeric and to a lesser extent monomeric in the ER. Monomer and dimer in ERGIC and cis-Golgi network. Forms homooligomer (via GOLD domain); the assembly is promoted by direct binding with leaderless cargos and may form a protein channel that facilitates cargo entry into the ERGIC. Forms heterooligomeric complexes with other members of the p24 family such as TMED2, TMED7 and TMED9. Interacts (via GOLD domain) with TMED2 (via GOLD domain); the complex is required for export of TMED10 from the ER to the cis-Golgi network; the complex is proposed to be involved in cis-Golgi network dynamics and / or biogenesis. Associates with the COPI vesicle coat subunits (coatomer). Tetramerization of the cytoplasmic domain at the Golgi membrane in vitro; the complex is proposed to interact with COPI coatomer and induce budding of the vesicles. Interacts with COPG1; the interaction involves TMED10 homodimer. Interacts with ARF1 (GDP-bound); the interaction probably involves a TMED10 oligomer. Interacts with SEC23A, SEC24B, SEC24C and SEC24D components of the coat protein complex II/COPII, indicative of an association of TMED10 with the COPII vesicle coat. Interacts with CD59. Interacts with MPPE1/PGAP5; the complex might recruit and sort GPI-anchored proteins to the ER-exit site, or the interaction might lead to recycling of PGAP5 between the ER and the Golgi. Interacts with F2LR1/PAR2. Interacts with KDELR2/ERD2; the interaction is disrupted by KDELR2 ligand. Found in a complex composed at least of SURF4, TMED2 and TMED10. Associates with the presenilin-dependent gamma-secretase complex. Interacts with STX17; the interaction is direct. Interacts with IL-1; the interaction is direct. Interacts with RAB21 (active GTP-bound form); the interaction is indirect and regulates TMED10 abundance and localization at the Golgi.

It is found in the endoplasmic reticulum membrane. It localises to the endoplasmic reticulum-Golgi intermediate compartment membrane. The protein resides in the golgi apparatus membrane. Its subcellular location is the golgi apparatus. The protein localises to the cis-Golgi network membrane. It is found in the trans-Golgi network membrane. It localises to the cytoplasmic vesicle. The protein resides in the secretory vesicle membrane. Its subcellular location is the cell membrane. The protein localises to the melanosome. In terms of biological role, cargo receptor involved in protein vesicular trafficking and quality control in the endoplasmic reticulum (ER) and Golgi. The p24 protein family is a group of transmembrane proteins that bind coat protein complex I/COPI and coat protein complex II/COPII involved in vesicular trafficking between the membranes. Acts at the lumenal side for incorporation of secretory cargo molecules into transport vesicles and involved in vesicle coat formation at the cytoplasmic side. Mainly functions in the early secretory pathway and cycles between the ER, ER-Golgi intermediate compartment (ERGIC) and Golgi, mediating cargo transport through COPI and COPII-coated vesicles. In COPII vesicle-mediated anterograde transport, involved in the transport of GPI-anchored proteins by acting together with TMED2 as their cargo receptor; the function specifically implies SEC24C and SEC24D of the COPII vesicle coat and lipid raft-like microdomains of the ER. Recognizes GPI anchors structural remodeled in the ER by the GPI inositol-deacylase/PGAP1 and the metallophosphoesterase MPPE1/PGAP5. In COPI vesicle-mediated retrograde transport, involved in the biogenesis of COPI vesicles and vesicle coat recruitment. Involved in trafficking of amyloid beta A4 protein and soluble APP-beta release (independent from the modulation of gamma-secretase activity). Involved in the KDELR2-mediated retrograde transport of the toxin A subunit (CTX-A-K63)together with COPI and the COOH terminus of KDELR2. On Golgi membranes, acts as a primary receptor for ARF1-GDP, a GTP-binding protein involved in COPI-vesicle formation. Increases coatomer-dependent GTPase-activating activity of ARFGAP2 which mediates the hydrolysis of ARF1-bound GTP and therefore modulates protein trafficking from the Golgi apparatus. Involved in the exocytic trafficking of G protein-coupled receptors F2LR1/PAR2 (trypsin and tryspin-like enzyme receptor), OPRM1 (opioid receptor) and P2RY4 (UTD and UDP receptor) from the Golgi to the plasma membrane, thus contributing to receptor resensitization. In addition to its cargo receptor activity, may also act as a protein channel after oligomerization, facilitating the post-translational entry of leaderless cytoplasmic cargo into the ERGIC. Involved in the translocation into ERGIC, the vesicle entry and the secretion of leaderless cargos (lacking the secretion signal sequence), including the mature form of interleukin 1/IL-1 family members, the alpha-crystallin B chain HSPB5, the carbohydrate-binding proteins galectin-1/LGALS1 and galectin-3/LGALS3, the microtubule-associated protein Tau/MAPT, and the annexin A1/ANXA1; the translocation process is dependent on cargo protein unfolding and enhanced by chaperones HSP90AB1 and HSP90B1/GRP9. Could also associates with the presenilin-dependent gamma-secretase complex in order to regulate gamma-cleavages of the amyloid beta A4 protein to yield amyloid-beta 40/Abeta40. This Oryctolagus cuniculus (Rabbit) protein is Transmembrane emp24 domain-containing protein 10 (TMED10).